A 110-amino-acid polypeptide reads, in one-letter code: Envelope glycoprotein N (110 aa).

The N-terminal stretch at 1-17 (MTASTVALALFVASILG) is a signal peptide. Residues 18 to 80 (HCWVTANSTG…SLSSFSSVWA (63 aa)) are Virion surface-facing. Residues 28-41 (VASSTERSSPSTAG) show a composition bias toward polar residues. The tract at residues 28-51 (VASSTERSSPSTAGLSARPSPGPT) is disordered. The helical transmembrane segment at 81 to 101 (LINALLVVVATFFYLVYLCFF) threads the bilayer. The Intravirion segment spans residues 102 to 110 (KFVDEVVHA).

It belongs to the herpesviridae glycoprotein N family. In terms of assembly, interacts (via N-terminus) with gM (via N-terminus). The gM-gN heterodimer forms the gCII complex. In terms of processing, O-glycosylated. Contains alpha 2,6-sialic acid residues. N-glycosylated.

It localises to the virion membrane. The protein localises to the host membrane. Its subcellular location is the host Golgi apparatus. The protein resides in the host trans-Golgi network. In terms of biological role, envelope glycoprotein necessary for proper maturation of gM and modulation of its membrane fusion activity. Also plays a critical role in virion morphogenesis. The chain is Envelope glycoprotein N from Homo sapiens (Human).